A 447-amino-acid polypeptide reads, in one-letter code: MITIKKGLDLPIAGKPAQVIHSGNAVNQVAILGEEYVGMRPSMKVREGDVVKKGQVLFEDKKNPGVIFTAPASGTITAINRGEKRVLQSVVINVEGDEKITFAKYSTEQLNTLSSEQVKQNLIESGLWTALRTRPFSKVPSIESEASSIFVNAMDTNPLAADPSVVLKEYSQDFTNGLTVLSRLFPSKPLHLCKAGDSNIPTTDLENLQIHDFTGVHPAGLVGTHIHFIDPVGIQKTVWHINYQDVIAVGKLFTTGELYSERVISLAGPQVKQPRLVRTIIGANLSQLTQNELSAGKNRVISGSVLCGQIAKDSHDYLGRYALQVSVIAEGNEKEFFGWIMPQANKYSVTRTVLGHFSKKLFNFTTSENGGERAMVPIGSYERVMPLDILPTLLLRDLIVGDTDGAQELGCLELDEEDLALCSFVCPGKYEYGSILRQVLDKIEKEG.

Belongs to the NqrA family. In terms of assembly, composed of six subunits; NqrA, NqrB, NqrC, NqrD, NqrE and NqrF.

The enzyme catalyses a ubiquinone + n Na(+)(in) + NADH + H(+) = a ubiquinol + n Na(+)(out) + NAD(+). NQR complex catalyzes the reduction of ubiquinone-1 to ubiquinol by two successive reactions, coupled with the transport of Na(+) ions from the cytoplasm to the periplasm. NqrA to NqrE are probably involved in the second step, the conversion of ubisemiquinone to ubiquinol. The polypeptide is Na(+)-translocating NADH-quinone reductase subunit A (Haemophilus influenzae (strain PittGG)).